The following is a 397-amino-acid chain: MSAAIYLVKGREKSVVRRHPWIFSRGIDRVEGNPQLGETVDVYGHDGKWLAKAAYSPESQIRARVWSFEKQDVNRAFFVKRIQDAQLLREDVIERDGLTGYRLIAAESDGMPGVTIDRYQNFFVCQLLSAGAEHQKQNIVDALIEVFPDCNVYERSDVSVRKKEGLQETTGVLHGEMPPKSVVIEENGVKISVDIVGGHKTGFYLDQRDSRQQAMKYVKDKEVLNCFSYTGGFGLYALKGGAKRVINADVSQPALDTAKFNAELNEFDISKKRAVFLNADVFKLLREYRDQGTKFDVVIMDPPKFAESKAQLNGACRGYKDINMLAMQILKPGGTLLTYSCSGLMDQVLFQKIIADAAVDAGRSVKFVERFEQAADHPTDTAYPEGFYLKGFACKVL.

The region spanning 2 to 80 (SAAIYLVKGR…QDVNRAFFVK (79 aa)) is the PUA domain.

It belongs to the methyltransferase superfamily. RlmI family.

Its subcellular location is the cytoplasm. It catalyses the reaction cytidine(1962) in 23S rRNA + S-adenosyl-L-methionine = 5-methylcytidine(1962) in 23S rRNA + S-adenosyl-L-homocysteine + H(+). Its function is as follows. Specifically methylates the cytosine at position 1962 (m5C1962) of 23S rRNA. This is Ribosomal RNA large subunit methyltransferase I from Vibrio vulnificus (strain YJ016).